The primary structure comprises 244 residues: Rho-related GTP-binding protein RhoE (244 aa).

30–37 is a binding site for GTP; the sequence is GDSQCGKT. Residues 52-60 carry the Effector region motif; sequence YVPTVFENY. GTP is bound by residues 77-81 and 135-138; these read DTSGS and CKSD. At C241 the chain carries Cysteine methyl ester. C241 carries S-farnesyl cysteine lipidation. A propeptide spans 242–244 (removed in mature form); the sequence is TVM.

Belongs to the small GTPase superfamily. Rho family. Binds ROCK1. Interacts with UBXD5. As to expression, ubiquitous.

The protein localises to the golgi apparatus membrane. Binds GTP but lacks intrinsic GTPase activity and is resistant to Rho-specific GTPase-activating proteins. In Homo sapiens (Human), this protein is Rho-related GTP-binding protein RhoE (RND3).